Here is an 842-residue protein sequence, read N- to C-terminus: Glucans biosynthesis glucosyltransferase H (842 aa).

The next 6 helical transmembrane spans lie at 141 to 161 (LLLL…TILP), 194 to 214 (ILLL…TALM), 513 to 533 (VFLT…FLAL), 570 to 590 (LFAS…ILIW), 615 to 635 (VLLA…AFLG), and 680 to 700 (FLFW…VSVI).

It belongs to the glycosyltransferase 2 family. OpgH subfamily.

It is found in the cell inner membrane. It functions in the pathway glycan metabolism; osmoregulated periplasmic glucan (OPG) biosynthesis. Its function is as follows. Involved in the biosynthesis of osmoregulated periplasmic glucans (OPGs). The polypeptide is Glucans biosynthesis glucosyltransferase H (Enterobacter sp. (strain 638)).